The sequence spans 240 residues: tRNA (guanine-N(1)-)-methyltransferase (240 aa).

Residues Gly-108 and 127–132 each bind S-adenosyl-L-methionine; that span reads LGDYIL.

The protein belongs to the RNA methyltransferase TrmD family. In terms of assembly, homodimer.

Its subcellular location is the cytoplasm. It carries out the reaction guanosine(37) in tRNA + S-adenosyl-L-methionine = N(1)-methylguanosine(37) in tRNA + S-adenosyl-L-homocysteine + H(+). In terms of biological role, specifically methylates guanosine-37 in various tRNAs. This Streptococcus sanguinis (strain SK36) protein is tRNA (guanine-N(1)-)-methyltransferase.